We begin with the raw amino-acid sequence, 164 residues long: Protein-export protein SecB (164 aa).

The protein belongs to the SecB family. As to quaternary structure, homotetramer, a dimer of dimers. One homotetramer interacts with 1 SecA dimer.

The protein resides in the cytoplasm. In terms of biological role, one of the proteins required for the normal export of preproteins out of the cell cytoplasm. It is a molecular chaperone that binds to a subset of precursor proteins, maintaining them in a translocation-competent state. It also specifically binds to its receptor SecA. The chain is Protein-export protein SecB from Janthinobacterium sp. (strain Marseille) (Minibacterium massiliensis).